We begin with the raw amino-acid sequence, 295 residues long: Ribosomal RNA small subunit methyltransferase A (295 aa).

S-adenosyl-L-methionine contacts are provided by Asn29, Leu31, Gly56, Glu77, Asp102, and Asn127.

It belongs to the class I-like SAM-binding methyltransferase superfamily. rRNA adenine N(6)-methyltransferase family. RsmA subfamily.

It is found in the cytoplasm. The enzyme catalyses adenosine(1518)/adenosine(1519) in 16S rRNA + 4 S-adenosyl-L-methionine = N(6)-dimethyladenosine(1518)/N(6)-dimethyladenosine(1519) in 16S rRNA + 4 S-adenosyl-L-homocysteine + 4 H(+). Its function is as follows. Specifically dimethylates two adjacent adenosines (A1518 and A1519) in the loop of a conserved hairpin near the 3'-end of 16S rRNA in the 30S particle. May play a critical role in biogenesis of 30S subunits. This Anoxybacillus flavithermus (strain DSM 21510 / WK1) protein is Ribosomal RNA small subunit methyltransferase A.